The primary structure comprises 1053 residues: Mediator of RNA polymerase II transcription subunit 16 (1053 aa).

A disordered region spans residues 139 to 170 (KTEGNTEKNKDTKQIGNGSGTNGHGDSPINTP). The segment covering 142–151 (GNTEKNKDTK) has biased composition (basic and acidic residues).

It belongs to the Mediator complex subunit 16 family. As to quaternary structure, component of the Mediator complex.

It localises to the nucleus. Functionally, component of the Mediator complex, a coactivator involved in the regulated transcription of nearly all RNA polymerase II-dependent genes. Mediator functions as a bridge to convey information from gene-specific regulatory proteins to the basal RNA polymerase II transcription machinery. Mediator is recruited to promoters by direct interactions with regulatory proteins and serves as a scaffold for the assembly of a functional preinitiation complex with RNA polymerase II and the general transcription factors. In Candida albicans (strain SC5314 / ATCC MYA-2876) (Yeast), this protein is Mediator of RNA polymerase II transcription subunit 16 (SIN4).